Here is a 493-residue protein sequence, read N- to C-terminus: Cytochrome c-552 (493 aa).

The signal sequence occupies residues 1-25; sequence MEKKLKSWQGWLLSGGSMVVVFVLG. His-116 is a binding site for heme c. Residues Cys-144, Cys-147, and Lys-148 each contribute to the heme site. Residues Cys-182, Cys-185, His-186, Cys-224, Cys-227, and His-228 each coordinate heme c. Residues Glu-230, Tyr-231, Lys-276, and Gln-278 each coordinate Ca(2+). Tyr-231 serves as a coordination point for substrate. His-279 is a binding site for substrate. The heme c site is built by His-290, Cys-297, Cys-300, His-301, His-315, Cys-328, Cys-331, His-332, and His-407.

It belongs to the cytochrome c-552 family. Requires Ca(2+) as cofactor. Heme c serves as cofactor.

The protein resides in the periplasm. It carries out the reaction 6 Fe(III)-[cytochrome c] + NH4(+) + 2 H2O = 6 Fe(II)-[cytochrome c] + nitrite + 8 H(+). Its pathway is nitrogen metabolism; nitrate reduction (assimilation). Its function is as follows. Catalyzes the reduction of nitrite to ammonia, consuming six electrons in the process. The chain is Cytochrome c-552 from Bacteroides thetaiotaomicron (strain ATCC 29148 / DSM 2079 / JCM 5827 / CCUG 10774 / NCTC 10582 / VPI-5482 / E50).